Reading from the N-terminus, the 95-residue chain is Aspartyl/glutamyl-tRNA(Asn/Gln) amidotransferase subunit C (95 aa).

This sequence belongs to the GatC family. In terms of assembly, heterotrimer of A, B and C subunits.

The catalysed reaction is L-glutamyl-tRNA(Gln) + L-glutamine + ATP + H2O = L-glutaminyl-tRNA(Gln) + L-glutamate + ADP + phosphate + H(+). The enzyme catalyses L-aspartyl-tRNA(Asn) + L-glutamine + ATP + H2O = L-asparaginyl-tRNA(Asn) + L-glutamate + ADP + phosphate + 2 H(+). In terms of biological role, allows the formation of correctly charged Asn-tRNA(Asn) or Gln-tRNA(Gln) through the transamidation of misacylated Asp-tRNA(Asn) or Glu-tRNA(Gln) in organisms which lack either or both of asparaginyl-tRNA or glutaminyl-tRNA synthetases. The reaction takes place in the presence of glutamine and ATP through an activated phospho-Asp-tRNA(Asn) or phospho-Glu-tRNA(Gln). The chain is Aspartyl/glutamyl-tRNA(Asn/Gln) amidotransferase subunit C from Rhodospirillum rubrum (strain ATCC 11170 / ATH 1.1.1 / DSM 467 / LMG 4362 / NCIMB 8255 / S1).